A 344-amino-acid polypeptide reads, in one-letter code: Hyoscyamine 6-dioxygenase (344 aa).

Residues 193-293 enclose the Fe2OG dioxygenase domain; the sequence is QIQMMLTNYY…RVSIATLIGP (101 aa). Positions 217, 219, and 274 each coordinate Fe cation. Arg284 contacts 2-oxoglutarate.

This sequence belongs to the iron/ascorbate-dependent oxidoreductase family. In terms of assembly, monomer. The cofactor is Fe(2+). It depends on L-ascorbate as a cofactor. The N-terminus is blocked. As to expression, root.

It carries out the reaction L-hyoscyamine + 2-oxoglutarate + O2 = (6S)-6-hydroxyhyoscyamine + succinate + CO2. The protein operates within alkaloid biosynthesis; scopolamine biosynthesis. The protein is Hyoscyamine 6-dioxygenase (H6H) of Hyoscyamus niger (Black henbane).